We begin with the raw amino-acid sequence, 690 residues long: Probable serine/threonine-protein kinase drkB (690 aa).

Residues 1–24 (MKVQIVFFSITVFIFVLFLLSVES) form the signal peptide. Positions 51–110 (DSKSSEHTTSSSSSSNSKNKGDSSSSSSNSGSSSNSIISGDSNSKDAPTTSSDSLSPATP) are disordered. Low complexity predominate over residues 57–96 (HTTSSSSSSNSKNKGDSSSSSSNSGSSSNSIISGDSNSKD). Residues 97–107 (APTTSSDSLSP) are compositionally biased toward polar residues. N-linked (GlcNAc...) asparagine glycosylation is found at Asn134, Asn180, Asn220, and Asn250. The tract at residues 287 to 335 (TITPTPTITPTPTITPTVTPTATPSTTPSTTPTTTPSTPTPTPTKSPYS) is disordered. Residues 296 to 323 (PTPTITPTVTPTATPSTTPSTTPTTTPS) show a composition bias toward low complexity. A helical membrane pass occupies residues 346-366 (IIIASSITGGLLISIFSFVFI). A Protein kinase domain is found at 391–644 (IKIGVRIGKG…EQCLEILESI (254 aa)). Residues 397 to 405 (IGKGNFGEV) and Lys418 each bind ATP. Asp514 functions as the Proton acceptor in the catalytic mechanism. Residues 649 to 690 (FDDIPVNNNNNNNSNNNENNNENNNNSDNNNNDINYSNRVIN) are disordered. Residues 655–681 (NNNNNNNSNNNENNNENNNNSDNNNND) are compositionally biased toward low complexity.

Belongs to the protein kinase superfamily. TKL Ser/Thr protein kinase family.

The protein resides in the membrane. The catalysed reaction is L-seryl-[protein] + ATP = O-phospho-L-seryl-[protein] + ADP + H(+). It catalyses the reaction L-threonyl-[protein] + ATP = O-phospho-L-threonyl-[protein] + ADP + H(+). The sequence is that of Probable serine/threonine-protein kinase drkB (drkB) from Dictyostelium discoideum (Social amoeba).